The chain runs to 473 residues: Cysteine--tRNA ligase (473 aa).

Cys30 serves as a coordination point for Zn(2+). The 'HIGH' region signature appears at 32–42 (MTVYDYCHIGH). Positions 213, 238, and 242 each coordinate Zn(2+). The short motif at 270–274 (KMSKS) is the 'KMSKS' region element. An ATP-binding site is contributed by Lys273.

Belongs to the class-I aminoacyl-tRNA synthetase family. As to quaternary structure, monomer. Zn(2+) serves as cofactor.

Its subcellular location is the cytoplasm. It catalyses the reaction tRNA(Cys) + L-cysteine + ATP = L-cysteinyl-tRNA(Cys) + AMP + diphosphate. This chain is Cysteine--tRNA ligase, found in Acinetobacter baumannii (strain AB307-0294).